The following is a 363-amino-acid chain: Probable tRNA pseudouridine synthase D (363 aa).

Asp82 acts as the Nucleophile in catalysis. Residues 151 to 363 (YLPAYIGYQR…IARTDPRLFT (213 aa)) form the TRUD domain.

This sequence belongs to the pseudouridine synthase TruD family.

The enzyme catalyses uridine(13) in tRNA = pseudouridine(13) in tRNA. Its function is as follows. Could be responsible for synthesis of pseudouridine from uracil-13 in transfer RNAs. The chain is Probable tRNA pseudouridine synthase D from Sulfurisphaera tokodaii (strain DSM 16993 / JCM 10545 / NBRC 100140 / 7) (Sulfolobus tokodaii).